A 235-amino-acid chain; its full sequence is Uridylate kinase (235 aa).

8 to 11 (KLSG) lines the ATP pocket. UMP is bound at residue glycine 49. ATP-binding residues include glycine 50 and arginine 54. 131–138 (TGNPYFST) provides a ligand contact to UMP. ATP-binding residues include asparagine 159, tyrosine 165, and aspartate 168.

The protein belongs to the UMP kinase family. Homohexamer.

It localises to the cytoplasm. It carries out the reaction UMP + ATP = UDP + ADP. It functions in the pathway pyrimidine metabolism; CTP biosynthesis via de novo pathway; UDP from UMP (UMPK route): step 1/1. With respect to regulation, inhibited by UTP. Catalyzes the reversible phosphorylation of UMP to UDP. This is Uridylate kinase from Mycoplasma pneumoniae (strain ATCC 29342 / M129 / Subtype 1) (Mycoplasmoides pneumoniae).